A 106-amino-acid polypeptide reads, in one-letter code: UPF0060 membrane protein Rleg2_1018 (106 aa).

4 consecutive transmembrane segments (helical) span residues 4 to 24 (IIYA…WAWL), 30 to 50 (VWWL…LTLV), 58 to 78 (TFAA…WLVE), and 86 to 106 (DIGG…GPRG).

It belongs to the UPF0060 family.

It localises to the cell inner membrane. The chain is UPF0060 membrane protein Rleg2_1018 from Rhizobium leguminosarum bv. trifolii (strain WSM2304).